The sequence spans 89 residues: MAENSVFVGNKPVMNYVLAVLTQFNSGATEVSIKARGRAISRAVDVAEIVRKRFLPDVDVKDIKISTEQIDSEQGTANVSAIEIILAKK.

It belongs to the histone-like Alba family.

It is found in the cytoplasm. It localises to the chromosome. In terms of biological role, binds double-stranded DNA tightly but without sequence specificity. Involved in DNA compaction. This Archaeoglobus fulgidus (strain ATCC 49558 / DSM 4304 / JCM 9628 / NBRC 100126 / VC-16) protein is DNA/RNA-binding protein Alba 1.